Reading from the N-terminus, the 201-residue chain is Protein ripply1 (201 aa).

Residues 1–29 (MDPAASPAAAPPAAPAAAPAADPAADPAA) are disordered. The span at 15–29 (PAAAPAADPAADPAA) shows a compositional bias: low complexity. The short motif at 57 to 60 (AYLW) is the WRPW motif element. Residues 99-134 (HPVRLYWPKSHSFDYLYSAGEILLNNFPVQATINLY) form a ripply homology domain region. Over residues 136-174 (DSDSADNEEDKEEEEEEEEEEDDEEEEEDEDKDVNENEP) the composition is skewed to acidic residues. The disordered stretch occupies residues 136–201 (DSDSADNEED…SPDPHSACPN (66 aa)).

This sequence belongs to the ripply family. As to expression, expressed in the anterior presomitic mesoderm and somites of stage E9.5 dpc embryos. Also expressed in tongue, diaphragm and intercostal muscles at 16.5 dpc.

The protein resides in the nucleus. Functionally, plays a role in somitogenesis. Essential for transcriptional repression of the segmental patterning genes, thus terminating the segmentation program in the presomitic mesoderm, and also required for the maintenance of rostrocaudal polarity in somites. In Mus musculus (Mouse), this protein is Protein ripply1.